The sequence spans 243 residues: Carboxy-S-adenosyl-L-methionine synthase (243 aa).

S-adenosyl-L-methionine contacts are provided by residues Y39, 64 to 66 (GCS), N132, and R199.

It belongs to the class I-like SAM-binding methyltransferase superfamily. Cx-SAM synthase family. In terms of assembly, homodimer.

It carries out the reaction prephenate + S-adenosyl-L-methionine = carboxy-S-adenosyl-L-methionine + 3-phenylpyruvate + H2O. In terms of biological role, catalyzes the conversion of S-adenosyl-L-methionine (SAM) to carboxy-S-adenosyl-L-methionine (Cx-SAM). The polypeptide is Carboxy-S-adenosyl-L-methionine synthase (Alteromonas mediterranea (strain DSM 17117 / CIP 110805 / LMG 28347 / Deep ecotype)).